The sequence spans 163 residues: Probable RNA-binding protein EIF1AD (163 aa).

Positions 18-96 constitute an S1-like domain; that stretch reads MMEDDYELPT…VKAEISKILT (79 aa). The interval 106–163 is disordered; that stretch reads AGIWPERFAKNPPQEAKAQNDDEDSDFEDDLTPNTNRPVQESDEEDEDTDTESSDEED. 2 stretches are compositionally biased toward acidic residues: residues 126–136 and 146–163; these read DDEDSDFEDDL and ESDE…DEED.

It belongs to the EIF1AD family.

This is Probable RNA-binding protein EIF1AD from Drosophila pseudoobscura pseudoobscura (Fruit fly).